The following is a 364-amino-acid chain: Peptide chain release factor 1 (364 aa).

Glutamine 232 is modified (N5-methylglutamine).

The protein belongs to the prokaryotic/mitochondrial release factor family. Methylated by PrmC. Methylation increases the termination efficiency of RF1.

Its subcellular location is the cytoplasm. In terms of biological role, peptide chain release factor 1 directs the termination of translation in response to the peptide chain termination codons UAG and UAA. The sequence is that of Peptide chain release factor 1 from Sorangium cellulosum (strain So ce56) (Polyangium cellulosum (strain So ce56)).